Reading from the N-terminus, the 91-residue chain is Probable Fe(2+)-trafficking protein (91 aa).

It belongs to the Fe(2+)-trafficking protein family.

In terms of biological role, could be a mediator in iron transactions between iron acquisition and iron-requiring processes, such as synthesis and/or repair of Fe-S clusters in biosynthetic enzymes. This is Probable Fe(2+)-trafficking protein from Acidobacterium capsulatum (strain ATCC 51196 / DSM 11244 / BCRC 80197 / JCM 7670 / NBRC 15755 / NCIMB 13165 / 161).